Reading from the N-terminus, the 451-residue chain is Probable plasmid replicative DNA helicase (451 aa).

The SF4 helicase domain occupies 194–451 (QNSFFDAFPT…SKFSAIKKVW (258 aa)). 225–232 (ARPSIGKT) contributes to the ATP binding site.

The protein belongs to the helicase family. DnaB subfamily. As to quaternary structure, homohexamer.

The enzyme catalyses Couples ATP hydrolysis with the unwinding of duplex DNA at the replication fork by translocating in the 5'-3' direction. This creates two antiparallel DNA single strands (ssDNA). The leading ssDNA polymer is the template for DNA polymerase III holoenzyme which synthesizes a continuous strand.. It carries out the reaction ATP + H2O = ADP + phosphate + H(+). In terms of biological role, a replicative DNA helicase, it participates in initiation and elongation during DNA replication. Travels ahead of the DNA replisome, separating dsDNA into templates for DNA synthesis. A processive ATP-dependent 5'-3' DNA helicase it has DNA-dependent ATPase activity. The plasmid this protein is encoded on is thought to be required for growth within mammalian cells. The protein is Probable plasmid replicative DNA helicase of Chlamydia trachomatis serovar L2 (strain ATCC VR-902B / DSM 19102 / 434/Bu).